A 504-amino-acid polypeptide reads, in one-letter code: UDP-N-acetylmuramoylalanine--D-glutamate ligase (504 aa).

129 to 135 lines the ATP pocket; the sequence is GTNGKTT.

Belongs to the MurCDEF family.

The protein localises to the cytoplasm. It catalyses the reaction UDP-N-acetyl-alpha-D-muramoyl-L-alanine + D-glutamate + ATP = UDP-N-acetyl-alpha-D-muramoyl-L-alanyl-D-glutamate + ADP + phosphate + H(+). It participates in cell wall biogenesis; peptidoglycan biosynthesis. Its function is as follows. Cell wall formation. Catalyzes the addition of glutamate to the nucleotide precursor UDP-N-acetylmuramoyl-L-alanine (UMA). The protein is UDP-N-acetylmuramoylalanine--D-glutamate ligase of Burkholderia mallei (strain NCTC 10247).